Here is a 255-residue protein sequence, read N- to C-terminus: Electron transfer flavoprotein beta subunit lysine methyltransferase (255 aa).

A mitochondrion-targeting transit peptide spans 1-32 (MAFSLCWKAPRSQWSFLQALNSGFPLFPWRTV).

This sequence belongs to the methyltransferase superfamily. ETFBKMT family. As to quaternary structure, interacts with HSPD1; this protein may possibly be a methylation substrate.

The protein resides in the cytoplasm. It localises to the mitochondrion matrix. It carries out the reaction L-lysyl-[protein] + 3 S-adenosyl-L-methionine = N(6),N(6),N(6)-trimethyl-L-lysyl-[protein] + 3 S-adenosyl-L-homocysteine + 3 H(+). Protein-lysine methyltransferase that selectively trimethylates the flavoprotein ETFB in mitochondria. Thereby, may negatively regulate the function of ETFB in electron transfer from Acyl-CoA dehydrogenases to the main respiratory chain. The chain is Electron transfer flavoprotein beta subunit lysine methyltransferase from Rattus norvegicus (Rat).